Consider the following 479-residue polypeptide: Glutamate--tRNA ligase (479 aa).

The short motif at 21–31 is the 'HIGH' region element; it reads PSPTGYLHVGG. A 'KMSKS' region motif is present at residues 248-252; sequence KLSKR. Lys-251 is a binding site for ATP.

This sequence belongs to the class-I aminoacyl-tRNA synthetase family. Glutamate--tRNA ligase type 1 subfamily. As to quaternary structure, monomer.

Its subcellular location is the cytoplasm. It carries out the reaction tRNA(Glu) + L-glutamate + ATP = L-glutamyl-tRNA(Glu) + AMP + diphosphate. Its function is as follows. Catalyzes the attachment of glutamate to tRNA(Glu) in a two-step reaction: glutamate is first activated by ATP to form Glu-AMP and then transferred to the acceptor end of tRNA(Glu). This Actinobacillus pleuropneumoniae serotype 5b (strain L20) protein is Glutamate--tRNA ligase.